Consider the following 82-residue polypeptide: MSILKVVEACNLAHTFLKLGYLFRAKTCLDIALDNLELLRRKTNIKEVAVMLNKKTTECLQLKRKIDKKIAQRVLIKIYTIK.

This is an uncharacterized protein from Autographa californica nuclear polyhedrosis virus (AcMNPV).